Consider the following 168-residue polypeptide: Protein YciE (168 aa).

The protein is Protein YciE (yciE) of Escherichia coli (strain K12).